The primary structure comprises 200 residues: Nucleoside triphosphate pyrophosphatase (200 aa).

Catalysis depends on Asp-79, which acts as the Proton acceptor.

This sequence belongs to the Maf family. A divalent metal cation is required as a cofactor.

The protein resides in the cytoplasm. It carries out the reaction a ribonucleoside 5'-triphosphate + H2O = a ribonucleoside 5'-phosphate + diphosphate + H(+). The catalysed reaction is a 2'-deoxyribonucleoside 5'-triphosphate + H2O = a 2'-deoxyribonucleoside 5'-phosphate + diphosphate + H(+). Functionally, nucleoside triphosphate pyrophosphatase. May have a dual role in cell division arrest and in preventing the incorporation of modified nucleotides into cellular nucleic acids. The polypeptide is Nucleoside triphosphate pyrophosphatase (Legionella pneumophila (strain Lens)).